The chain runs to 1179 residues: Protein turtle homolog A (1179 aa).

The first 20 residues, 1 to 20 (MIWCLRLTILSLILSQGADG), serve as a signal peptide directing secretion. Topologically, residues 21-734 (RRKPEVVSVV…TQLPGLLPQP (714 aa)) are extracellular. Ig-like domains lie at 24–124 (PEVV…DFAN), 136–216 (PQFQ…GSVT), 226–318 (PPVI…AYLT), 322–410 (PAQV…SPVT), and 418–498 (PAFI…VTIS). 5 disulfides stabilise this stretch: Cys-41–Cys-108, Cys-158–Cys-206, Cys-248–Cys-301, Cys-344–Cys-395, and Cys-440–Cys-486. Residue Asn-188 is glycosylated (N-linked (GlcNAc...) asparagine). 2 Fibronectin type-III domains span residues 507–611 (SPHV…TTPA) and 623–718 (PLSP…TSGL). Asn-513 and Asn-524 each carry an N-linked (GlcNAc...) asparagine glycan. Residues 735-755 (VLAGVVGGVCFLGVAVLVSIL) form a helical membrane-spanning segment. At 756-1179 (AACLMNRRRA…ISYPEQATLL (424 aa)) the chain is on the cytoplasmic side. A disordered region spans residues 766-807 (ARRHRKRLRQDPPLIFSPRGRSGPHSAPGSDSPDSVTKFKLQ). Phosphoserine is present on Ser-809. Disordered regions lie at residues 819-846 (LWGE…EPIC), 869-895 (ERSE…SGVP), 942-979 (PPLE…NLRA), and 1016-1079 (APRG…KRRN). The segment covering 884–893 (LDCSSSSPSG) has biased composition (polar residues). The segment covering 1020–1029 (SLTSQSSGRG) has biased composition (polar residues). The PDZ-binding signature appears at 1177–1179 (TLL).

This sequence belongs to the immunoglobulin superfamily. Turtle family. Interacts with SHANK1 and probably with MAGI2. As to expression, expressed in hippocampal neurons (at protein level).

Its subcellular location is the cell membrane. It localises to the synapse. Functions in dendrite outgrowth and synapse maturation. The chain is Protein turtle homolog A (Igsf9) from Rattus norvegicus (Rat).